Reading from the N-terminus, the 334-residue chain is Tryptophan--tRNA ligase (334 aa).

ATP contacts are provided by residues 11–13 and 19–20; these read QPT and GN. The 'HIGH' region signature appears at 12–20; that stretch reads PTGKLTIGN. Asp-135 is a binding site for L-tryptophan. ATP is bound by residues 147 to 149, Ile-186, and 195 to 199; these read GED and KMSKS. The 'KMSKS' region motif lies at 195–199; it reads KMSKS.

The protein belongs to the class-I aminoacyl-tRNA synthetase family. As to quaternary structure, homodimer.

The protein resides in the cytoplasm. The catalysed reaction is tRNA(Trp) + L-tryptophan + ATP = L-tryptophyl-tRNA(Trp) + AMP + diphosphate + H(+). Functionally, catalyzes the attachment of tryptophan to tRNA(Trp). The polypeptide is Tryptophan--tRNA ligase (Blochmanniella floridana).